Here is a 425-residue protein sequence, read N- to C-terminus: Serine--tRNA ligase (425 aa).

L-serine is bound at residue 230 to 232; that stretch reads TAE. 261–263 is a binding site for ATP; sequence RQE. Position 284 (Glu284) interacts with L-serine. Position 348–351 (348–351) interacts with ATP; it reads EISS. Ser384 serves as a coordination point for L-serine.

This sequence belongs to the class-II aminoacyl-tRNA synthetase family. Type-1 seryl-tRNA synthetase subfamily. As to quaternary structure, homodimer. The tRNA molecule binds across the dimer.

The protein localises to the cytoplasm. The catalysed reaction is tRNA(Ser) + L-serine + ATP = L-seryl-tRNA(Ser) + AMP + diphosphate + H(+). It carries out the reaction tRNA(Sec) + L-serine + ATP = L-seryl-tRNA(Sec) + AMP + diphosphate + H(+). Its pathway is aminoacyl-tRNA biosynthesis; selenocysteinyl-tRNA(Sec) biosynthesis; L-seryl-tRNA(Sec) from L-serine and tRNA(Sec): step 1/1. In terms of biological role, catalyzes the attachment of serine to tRNA(Ser). Is also able to aminoacylate tRNA(Sec) with serine, to form the misacylated tRNA L-seryl-tRNA(Sec), which will be further converted into selenocysteinyl-tRNA(Sec). This chain is Serine--tRNA ligase, found in Caldanaerobacter subterraneus subsp. tengcongensis (strain DSM 15242 / JCM 11007 / NBRC 100824 / MB4) (Thermoanaerobacter tengcongensis).